The following is a 349-amino-acid chain: Cytoplasmic tRNA 2-thiolation protein 2 (349 aa).

It belongs to the CTU2/NCS2 family.

The protein resides in the cytoplasm. Its pathway is tRNA modification; 5-methoxycarbonylmethyl-2-thiouridine-tRNA biosynthesis. Its function is as follows. Plays a central role in 2-thiolation of mcm(5)S(2)U at tRNA wobble positions of tRNA(Lys), tRNA(Glu) and tRNA(Gln). May act by forming a heterodimer with tut-1/ctu-1 that ligates sulfur from thiocarboxylated urm-1 onto the uridine of tRNAs at wobble position. In Caenorhabditis elegans, this protein is Cytoplasmic tRNA 2-thiolation protein 2.